Here is a 258-residue protein sequence, read N- to C-terminus: (7aS)-7a-methyl-1,5-dioxo-2,3,5,6,7,7a-hexahydro-1H-indene-carboxyl-CoA hydrolase (258 aa).

It belongs to the enoyl-CoA hydratase/isomerase family.

The enzyme catalyses (7aS)-7a-methyl-1,5-dioxo-2,3,5,6,7,7a-hexahydro-1H-indene-carboxyl-CoA + H2O = (3E)-2-(2-carboxylatoethyl)-3-methyl-6-oxocyclohex-1-ene-1-carboxyl-CoA + H(+). Its pathway is steroid metabolism; cholesterol degradation. Functionally, involved in the final steps of cholesterol and steroid degradation. Catalyzes the hydrolytic ring D opening of (7aS)-7a-methyl-1,5-dioxo-2,3,5,6,7,7a-hexahydro-1H-indene-carboxyl-CoA (HIEC-CoA) to (3E)-2-(2-carboxylatoethyl)-3-methyl-6-oxocyclohex-1-ene-1-carboxyl-CoA (COCHEA-CoA). The chain is (7aS)-7a-methyl-1,5-dioxo-2,3,5,6,7,7a-hexahydro-1H-indene-carboxyl-CoA hydrolase from Rhodococcus jostii (strain RHA1).